Here is a 349-residue protein sequence, read N- to C-terminus: Thioredoxin reductase, mitochondrial (349 aa).

Residues 1 to 30 (MLLVRNSTLGRLSSLRGFFRNINESNIFYR) constitute a mitochondrion transit peptide. FAD is bound by residues 41 to 44 (SGPA), 70 to 71 (IA), Q75, N84, V117, C175, D318, and 325 to 327 (RQA). A disulfide bridge connects residues C172 and C175.

This sequence belongs to the class-II pyridine nucleotide-disulfide oxidoreductase family. As to quaternary structure, homodimer. The cofactor is FAD.

The protein resides in the mitochondrion. The catalysed reaction is [thioredoxin]-dithiol + NADP(+) = [thioredoxin]-disulfide + NADPH + H(+). This Kluyveromyces lactis (strain ATCC 8585 / CBS 2359 / DSM 70799 / NBRC 1267 / NRRL Y-1140 / WM37) (Yeast) protein is Thioredoxin reductase, mitochondrial (TRR1).